The primary structure comprises 104 residues: MAAKIRREDEVIVLTGKDKGKRGKVKQVLSSGKVIVEGINLVKKHQKPVPALNQPGGIVEKEAAIQVSNVAIFNAATGKADRVGFRFEDGKKVRFFKSNKETIK.

It belongs to the universal ribosomal protein uL24 family. In terms of assembly, part of the 50S ribosomal subunit.

Its function is as follows. One of two assembly initiator proteins, it binds directly to the 5'-end of the 23S rRNA, where it nucleates assembly of the 50S subunit. One of the proteins that surrounds the polypeptide exit tunnel on the outside of the subunit. The protein is Large ribosomal subunit protein uL24 of Proteus mirabilis (strain HI4320).